The chain runs to 579 residues: Glypican-2 (579 aa).

A signal peptide spans 1-21; it reads MSALRPLLLLLLHLCPGLGPG. 3 O-linked (Xyl...) (heparan sulfate) serine glycosylation sites follow: Ser-55, Ser-92, and Ser-155. 2 disordered regions span residues 347 to 382 and 483 to 552; these read GTPH…PTTA and ALGQ…GRSR. The segment covering 361 to 379 has biased composition (basic and acidic residues); it reads APREEASRSWRASAEEERP. 2 O-linked (Xyl...) (heparan sulfate) serine glycosylation sites follow: Ser-498 and Ser-500. Residues 517 to 527 show a composition bias toward pro residues; the sequence is VVPPARPPRPP. A lipid anchor (GPI-anchor amidated serine) is attached at Ser-556. Residues 557–579 constitute a propeptide, removed in mature form; the sequence is SVGLHTPLVLLLLPSALTLLVLR.

The protein belongs to the glypican family. In terms of assembly, interacts (via heparan sulfate) with PTN; this interaction promotes neurite outgrowth through binding of PTN with chondroitin sulfate of proteoglycans, thereby releasing PTPRS of chondroitin sulfate proteoglycans (CSPGs) and leading to binding with heparan sulfate of GPC2. Interacts (heparan sulfate chain) with MDK; this interaction is inhibited by heparin followed by chondroitin sulfate E; this interaction induces GPC2 clustering through heparan sulfate chain; this interaction induces neuronal cell adhesion and neurite outgrowth.

Its subcellular location is the cell membrane. The protein resides in the secreted. It localises to the extracellular space. Functionally, cell surface proteoglycan that bears heparan sulfate. May fulfill a function related to the motile behaviors of developing neurons. The chain is Glypican-2 (Gpc2) from Mus musculus (Mouse).